An 85-amino-acid polypeptide reads, in one-letter code: Putative membrane protein insertion efficiency factor (85 aa).

This sequence belongs to the UPF0161 family.

It is found in the cell inner membrane. Could be involved in insertion of integral membrane proteins into the membrane. The chain is Putative membrane protein insertion efficiency factor from Tolumonas auensis (strain DSM 9187 / NBRC 110442 / TA 4).